Consider the following 133-residue polypeptide: Ribosomal RNA large subunit methyltransferase H 1 (133 aa).

S-adenosyl-L-methionine-binding positions include Ile55, Gly89, and 101 to 106 (ISPMEM).

This sequence belongs to the RNA methyltransferase RlmH family. As to quaternary structure, homodimer.

It localises to the cytoplasm. It catalyses the reaction pseudouridine(1915) in 23S rRNA + S-adenosyl-L-methionine = N(3)-methylpseudouridine(1915) in 23S rRNA + S-adenosyl-L-homocysteine + H(+). Functionally, specifically methylates the pseudouridine at position 1915 (m3Psi1915) in 23S rRNA. This Thermoanaerobacter sp. (strain X514) protein is Ribosomal RNA large subunit methyltransferase H 1.